A 603-amino-acid chain; its full sequence is MPVRQLPETIVNRIAAGEVVERPASVVKELVENALDAGANRIEVFSDGGGRRRIAITDDGGGMTRADLELAVDRHATSKLDDEDLLAIRTLGFRGEALPSIGSVAKLSITTRHTEEPHAWALAVEGGTKSPLVPAALSQGTRVEVSDLFYATPARLKFLKTDRTEAEAIREVVRRLAMARPDVAFTLSGEERAPVSWAAVLPGAAGRLTRLSDILGAEFRKSAIEVRSERDGVVVEGFAGAPSLTRANALGQYLFVNGRPVRDRLIIGAVRAAYADYLPRDRHPVLALFVTCDPHEVDANVHPAKTEVRFRDAGLVRALIVHALKDGLSREGQRSAAASVDGATLAAFRPGFAPPPRANWDWRRSPSYPIAGSNAMDMAPGFAEREQAGFDVGLPSADVRNYAAPAAELIDRPLGAARTQIHETYIVAQTRTGLVIVDQHAAHERLVYEKLKASMASNGVQRQLLLIPEIVELDEATVEQLLDRAEELCSFGLAIDSFGPGAVAVREVPALLGKANAASLLRDLAEHMAEWDEALPLERRLLHVAATMACHGSVRAGRILKPEEMNALLREMEATPNSGQCNHGRPTYVELTLSDIEKLFGRR.

The protein belongs to the DNA mismatch repair MutL/HexB family.

Functionally, this protein is involved in the repair of mismatches in DNA. It is required for dam-dependent methyl-directed DNA mismatch repair. May act as a 'molecular matchmaker', a protein that promotes the formation of a stable complex between two or more DNA-binding proteins in an ATP-dependent manner without itself being part of a final effector complex. The chain is DNA mismatch repair protein MutL from Rhodopseudomonas palustris (strain BisA53).